We begin with the raw amino-acid sequence, 903 residues long: Protein translocase subunit SecA (903 aa).

ATP is bound by residues glutamine 87, 105–109 (GEGKT), and aspartate 512. The disordered stretch occupies residues 853–903 (KQQQLSHYEENALVTEDPNAPATAERKVGRNDPCPCGSGKKYKQCHGRLQS). Zn(2+) is bound by residues cysteine 886, cysteine 888, cysteine 897, and histidine 898. Residues 892–903 (KKYKQCHGRLQS) show a composition bias toward basic residues.

This sequence belongs to the SecA family. As to quaternary structure, monomer and homodimer. Part of the essential Sec protein translocation apparatus which comprises SecA, SecYEG and auxiliary proteins SecDF-YajC and YidC. The cofactor is Zn(2+).

The protein localises to the cell inner membrane. It localises to the cytoplasm. The catalysed reaction is ATP + H2O + cellular proteinSide 1 = ADP + phosphate + cellular proteinSide 2.. Its function is as follows. Part of the Sec protein translocase complex. Interacts with the SecYEG preprotein conducting channel. Has a central role in coupling the hydrolysis of ATP to the transfer of proteins into and across the cell membrane, serving both as a receptor for the preprotein-SecB complex and as an ATP-driven molecular motor driving the stepwise translocation of polypeptide chains across the membrane. The polypeptide is Protein translocase subunit SecA (Serratia proteamaculans (strain 568)).